A 331-amino-acid chain; its full sequence is Ketol-acid reductoisomerase (NADP(+)) (331 aa).

A KARI N-terminal Rossmann domain is found at 2-182 (ARMYYDEDAN…GGTRGGVLET (181 aa)). Residues 25–28 (YGSQ), Ser-51, Ser-53, and 83–86 (DEVQ) each bind NADP(+). The active site involves His-108. Gly-134 lines the NADP(+) pocket. Residues 183–328 (TFREETETDL…KDLRAMFSWL (146 aa)) enclose the KARI C-terminal knotted domain. 4 residues coordinate Mg(2+): Asp-191, Glu-195, Glu-227, and Glu-231. Residue Ser-252 coordinates substrate.

Belongs to the ketol-acid reductoisomerase family. Requires Mg(2+) as cofactor.

The catalysed reaction is (2R)-2,3-dihydroxy-3-methylbutanoate + NADP(+) = (2S)-2-acetolactate + NADPH + H(+). The enzyme catalyses (2R,3R)-2,3-dihydroxy-3-methylpentanoate + NADP(+) = (S)-2-ethyl-2-hydroxy-3-oxobutanoate + NADPH + H(+). Its pathway is amino-acid biosynthesis; L-isoleucine biosynthesis; L-isoleucine from 2-oxobutanoate: step 2/4. It functions in the pathway amino-acid biosynthesis; L-valine biosynthesis; L-valine from pyruvate: step 2/4. Involved in the biosynthesis of branched-chain amino acids (BCAA). Catalyzes an alkyl-migration followed by a ketol-acid reduction of (S)-2-acetolactate (S2AL) to yield (R)-2,3-dihydroxy-isovalerate. In the isomerase reaction, S2AL is rearranged via a Mg-dependent methyl migration to produce 3-hydroxy-3-methyl-2-ketobutyrate (HMKB). In the reductase reaction, this 2-ketoacid undergoes a metal-dependent reduction by NADPH to yield (R)-2,3-dihydroxy-isovalerate. This chain is Ketol-acid reductoisomerase (NADP(+)), found in Trichormus variabilis (strain ATCC 29413 / PCC 7937) (Anabaena variabilis).